The sequence spans 522 residues: Ribose import ATP-binding protein RbsA 1 (522 aa).

ABC transporter domains lie at 8–243 (LRIE…GRSI) and 249–496 (RERP…VSTN). 40–47 (GENGAGKS) serves as a coordination point for ATP. The interval 492 to 522 (AVSTNQYKPDKSDKPDASAGKTDQKEAPRGH) is disordered. Residues 499–522 (KPDKSDKPDASAGKTDQKEAPRGH) are compositionally biased toward basic and acidic residues.

The protein belongs to the ABC transporter superfamily. Ribose importer (TC 3.A.1.2.1) family. As to quaternary structure, the complex is composed of an ATP-binding protein (RbsA), two transmembrane proteins (RbsC) and a solute-binding protein (RbsB).

It localises to the cell membrane. It catalyses the reaction D-ribose(out) + ATP + H2O = D-ribose(in) + ADP + phosphate + H(+). Part of the ABC transporter complex RbsABC involved in ribose import. Responsible for energy coupling to the transport system. This is Ribose import ATP-binding protein RbsA 1 from Streptomyces avermitilis (strain ATCC 31267 / DSM 46492 / JCM 5070 / NBRC 14893 / NCIMB 12804 / NRRL 8165 / MA-4680).